Reading from the N-terminus, the 75-residue chain is Endogenous retrovirus group K member 7 Np9 protein (75 aa).

Residues 24-43 form a disordered region; the sequence is PKRQRPSRTGHDDDGGFVEK. The span at 32-43 shows a compositional bias: basic and acidic residues; the sequence is TGHDDDGGFVEK.

The protein localises to the nucleus. Functionally, may possess a function in tumorigenesis. This chain is Endogenous retrovirus group K member 7 Np9 protein (ERVK-7), found in Homo sapiens (Human).